Consider the following 689-residue polypeptide: FAST kinase domain-containing protein 2, mitochondrial (689 aa).

Phosphoserine is present on residues serine 113 and serine 126. The RAP domain occupies 617–674 (VAVLCVPKSVYCLNSCHPRGLMAMKIRHLNVMGFHVILIHNWELKKLKMEDAVTFVRK).

The protein belongs to the FAST kinase family. In terms of assembly, monomer. Found in a complex with GRSF1, DDX28, DHX30 and FASTKD5. Associates with the 16S mitochondrial rRNA (16S mt-rRNA). Forms a regulatory protein-RNA complex, consisting of RCC1L, NGRN, RPUSD3, RPUSD4, TRUB2, FASTKD2 and 16S mt-rRNA. As to expression, ubiquitously expressed. Expression detected in spleen, testis, colon, heart, smooth muscle, kidney, brain, lung, liver, brown and white adipose tissue with highest expression in testis, heart and smooth muscle.

It localises to the mitochondrion matrix. Its subcellular location is the mitochondrion nucleoid. Plays an important role in assembly of the mitochondrial large ribosomal subunit. As a component of a functional protein-RNA module, consisting of RCC1L, NGRN, RPUSD3, RPUSD4, TRUB2, FASTKD2 and 16S mitochondrial ribosomal RNA (16S mt-rRNA), controls 16S mt-rRNA abundance and is required for intra-mitochondrial translation. May play a role in mitochondrial apoptosis. The protein is FAST kinase domain-containing protein 2, mitochondrial (Fastkd2) of Mus musculus (Mouse).